Consider the following 37-residue polypeptide: Potassium channel toxin alpha-KTx 1.13 (37 aa).

Gln-1 bears the Pyrrolidone carboxylic acid mark. 3 cysteine pairs are disulfide-bonded: Cys-7/Cys-28, Cys-13/Cys-33, and Cys-17/Cys-35. The interaction with Ca(2+)-activated K(+) channels stretch occupies residues 26 to 33; sequence GKCMNKKC.

It belongs to the short scorpion toxin superfamily. Potassium channel inhibitor family. Alpha-KTx 01 subfamily. In terms of tissue distribution, expressed by the venom gland.

The protein localises to the secreted. Functionally, potent selective inhibitor of high conductance (maxi-K), different medium and small conductance calcium-activated potassium channels (KCa1.1/KCNMA1 and others), as well as a voltage-dependent potassium channel (Kv1.3/KCNA3&gt;Kv1.2/KCNA2&gt;Kv1.6/KCNA3&gt;&gt;Shaker/Sh). It blocks channel activity by a simple bimolecular inhibition process. Has a pH-specific antimicrobial activity against bacteria (B.subtilis, E.coli and S.aureus) and the fungus C.albicans. The chain is Potassium channel toxin alpha-KTx 1.13 from Leiurus hebraeus (Hebrew deathstalker scorpion).